Here is a 105-residue protein sequence, read N- to C-terminus: Large ribosomal subunit protein uL24 (105 aa).

The tract at residues 75-105 (DSDGNPTRVGYRTDEESGKRVRISRKNGKDI) is disordered. The segment covering 94 to 105 (RVRISRKNGKDI) has biased composition (basic residues).

Belongs to the universal ribosomal protein uL24 family. In terms of assembly, part of the 50S ribosomal subunit.

In terms of biological role, one of two assembly initiator proteins, it binds directly to the 5'-end of the 23S rRNA, where it nucleates assembly of the 50S subunit. Functionally, one of the proteins that surrounds the polypeptide exit tunnel on the outside of the subunit. The polypeptide is Large ribosomal subunit protein uL24 (Rhodococcus jostii (strain RHA1)).